Here is a 1054-residue protein sequence, read N- to C-terminus: Bifunctional glutamine synthetase adenylyltransferase/adenylyl-removing enzyme (1054 aa).

An adenylyl removase region spans residues 1-535 (MRKTLPSIGA…LHRKLFYRPL (535 aa)). Polar residues-rich tracts occupy residues 138–150 (SFSS…QGSD) and 165–175 (DTANTDLSTPG). The tract at residues 138–175 (SFSSESQQPQGSDSDSEFSFGADLSADDTANTDLSTPG) is disordered. The tract at residues 541 to 1054 (NISVGTLKLS…WGVDSIEHDY (514 aa)) is adenylyl transferase.

Belongs to the GlnE family. Mg(2+) serves as cofactor.

The catalysed reaction is [glutamine synthetase]-O(4)-(5'-adenylyl)-L-tyrosine + phosphate = [glutamine synthetase]-L-tyrosine + ADP. It catalyses the reaction [glutamine synthetase]-L-tyrosine + ATP = [glutamine synthetase]-O(4)-(5'-adenylyl)-L-tyrosine + diphosphate. Its function is as follows. Involved in the regulation of glutamine synthetase GlnA, a key enzyme in the process to assimilate ammonia. When cellular nitrogen levels are high, the C-terminal adenylyl transferase (AT) inactivates GlnA by covalent transfer of an adenylyl group from ATP to specific tyrosine residue of GlnA, thus reducing its activity. Conversely, when nitrogen levels are low, the N-terminal adenylyl removase (AR) activates GlnA by removing the adenylyl group by phosphorolysis, increasing its activity. The regulatory region of GlnE binds the signal transduction protein PII (GlnB) which indicates the nitrogen status of the cell. The polypeptide is Bifunctional glutamine synthetase adenylyltransferase/adenylyl-removing enzyme (Corynebacterium diphtheriae (strain ATCC 700971 / NCTC 13129 / Biotype gravis)).